A 1107-amino-acid chain; its full sequence is Voltage-gated delayed rectifier potassium channel KCNH8 (1107 aa).

Residues M1–D225 are Cytoplasmic-facing. The 73-residue stretch at I18–K90 folds into the PAS domain. The PAC domain occupies F93–K145. A helical transmembrane segment spans residues W226–I246. The Extracellular segment spans residues G247–R255. A helical transmembrane segment spans residues S256 to F276. Residues R277 to Y298 lie on the Cytoplasmic side of the membrane. Residues V299–F319 traverse the membrane as a helical segment. The N-linked (GlcNAc...) asparagine glycan is linked to N320. Residues N320–V327 lie on the Extracellular side of the membrane. The helical; Voltage-sensor transmembrane segment at H328–Y348 threads the bilayer. Residues S349–T357 are Cytoplasmic-facing. Residues L358–G378 traverse the membrane as a helical segment. Topologically, residues K379–S419 are extracellular. Residue N409 is glycosylated (N-linked (GlcNAc...) asparagine). The segment at residues A420–V440 is an intramembrane region (pore-forming). Residues S434–N439 carry the Selectivity filter motif. At S441–K448 the chain is on the extracellular side. The chain crosses the membrane as a helical span at residues I449–V469. Topologically, residues T470–V1107 are cytoplasmic. Residues L551–D668 form a cNMP-binding domain region. The span at S686–I702 shows a compositional bias: polar residues. Disordered regions lie at residues S686–V742, H764–E791, E818–G847, and V961–P989. Acidic residues predominate over residues V710–A724. A compositionally biased stretch (polar residues) spans V961–R972.

It belongs to the potassium channel family. H (Eag) (TC 1.A.1.20) subfamily. Kv12.1/KCNH8 sub-subfamily. As to quaternary structure, the potassium channel is probably composed of a homo- or heterotetrameric complex of pore-forming alpha subunits that can associate with modulating beta subunits. As to expression, primarily expressed in the nervous system.

It is found in the membrane. It carries out the reaction K(+)(in) = K(+)(out). Its function is as follows. Pore-forming (alpha) subunit of a voltage-gated delayed rectifier potassium channel that mediates outward-rectifying potassium currents. Elicits a slowly activating, non-inactivating and slowly deactivation outwards potassium current at depolarizating voltages from -30 mV to +50mV. Shows no obvious change in the activation rate from different holding potentials. Activation is strongly dependent on the pH of the external solution. The polypeptide is Voltage-gated delayed rectifier potassium channel KCNH8 (Homo sapiens (Human)).